The chain runs to 434 residues: 3-phosphoshikimate 1-carboxyvinyltransferase (434 aa).

3-phosphoshikimate contacts are provided by Lys22, Ser23, and Arg27. Phosphoenolpyruvate is bound at residue Lys22. Phosphoenolpyruvate contacts are provided by Gly93 and Arg121. 3-phosphoshikimate-binding residues include Ser168, Ser169, Gln170, Ser199, Asp320, and Lys347. Residue Gln170 participates in phosphoenolpyruvate binding. Residue Asp320 is the Proton acceptor of the active site. Arg351, Arg394, and Lys419 together coordinate phosphoenolpyruvate.

This sequence belongs to the EPSP synthase family. As to quaternary structure, monomer.

It localises to the cytoplasm. It carries out the reaction 3-phosphoshikimate + phosphoenolpyruvate = 5-O-(1-carboxyvinyl)-3-phosphoshikimate + phosphate. The protein operates within metabolic intermediate biosynthesis; chorismate biosynthesis; chorismate from D-erythrose 4-phosphate and phosphoenolpyruvate: step 6/7. Catalyzes the transfer of the enolpyruvyl moiety of phosphoenolpyruvate (PEP) to the 5-hydroxyl of shikimate-3-phosphate (S3P) to produce enolpyruvyl shikimate-3-phosphate and inorganic phosphate. This Burkholderia ambifaria (strain ATCC BAA-244 / DSM 16087 / CCUG 44356 / LMG 19182 / AMMD) (Burkholderia cepacia (strain AMMD)) protein is 3-phosphoshikimate 1-carboxyvinyltransferase.